The primary structure comprises 801 residues: Cadherin-20 (801 aa).

The first 34 residues, 1–34 (MWTSGRMSNAKNWLGLGMSLYFWGLMDLTTTVLS), serve as a signal peptide directing secretion. The propeptide occupies 35–59 (DTPTPQGELEALLSDKPQSHQRTKR). Topologically, residues 60–619 (SWVWNQFFVL…AYMLPVSLSR (560 aa)) are extracellular. Cadherin domains are found at residues 61 to 165 (WVWN…EPKF), 166 to 274 (LDGP…PPRF), 275 to 389 (PQKH…PPVF), 390 to 494 (EPGF…APEF), and 494 to 610 (FPRF…SPEA). A glycan (N-linked (GlcNAc...) asparagine) is linked at asparagine 261. N-linked (GlcNAc...) asparagine glycans are attached at residues asparagine 420, asparagine 461, and asparagine 542. The helical transmembrane segment at 620 to 640 (GALIAILACIFVLLVLVLLIL) threads the bilayer. Residues 641 to 801 (SMRRHRKQPY…GASEGPAPLW (161 aa)) are Cytoplasmic-facing.

In terms of tissue distribution, expressed in placenta, adult brain, and fetal brain.

It is found in the cell membrane. Its function is as follows. Cadherins are calcium-dependent cell adhesion proteins. They preferentially interact with themselves in a homophilic manner in connecting cells; cadherins may thus contribute to the sorting of heterogeneous cell types. The chain is Cadherin-20 (CDH20) from Homo sapiens (Human).